We begin with the raw amino-acid sequence, 340 residues long: GTPase Obg (340 aa).

Positions 1-158 (MSFIDEAKVY…KYITLKLKII (158 aa)) constitute an Obg domain. The 167-residue stretch at 159–325 (SDIGIIGLPN…LSTLIQYIHK (167 aa)) folds into the OBG-type G domain. GTP is bound by residues 165–172 (GLPNAGKS), 190–194 (FTTLE), 211–214 (DIPG), 278–281 (NKSD), and 306–308 (SSI). Mg(2+) is bound by residues serine 172 and threonine 192.

Belongs to the TRAFAC class OBG-HflX-like GTPase superfamily. OBG GTPase family. As to quaternary structure, monomer. Requires Mg(2+) as cofactor.

Its subcellular location is the cytoplasm. Functionally, an essential GTPase which binds GTP, GDP and possibly (p)ppGpp with moderate affinity, with high nucleotide exchange rates and a fairly low GTP hydrolysis rate. Plays a role in control of the cell cycle, stress response, ribosome biogenesis and in those bacteria that undergo differentiation, in morphogenesis control. The chain is GTPase Obg from Ehrlichia chaffeensis (strain ATCC CRL-10679 / Arkansas).